A 488-amino-acid polypeptide reads, in one-letter code: UDP-N-acetylmuramate--L-alanine ligase (488 aa).

126–132 (GTHGKTT) contacts ATP.

Belongs to the MurCDEF family.

It is found in the cytoplasm. It catalyses the reaction UDP-N-acetyl-alpha-D-muramate + L-alanine + ATP = UDP-N-acetyl-alpha-D-muramoyl-L-alanine + ADP + phosphate + H(+). Its pathway is cell wall biogenesis; peptidoglycan biosynthesis. Its function is as follows. Cell wall formation. This Cronobacter sakazakii (strain ATCC BAA-894) (Enterobacter sakazakii) protein is UDP-N-acetylmuramate--L-alanine ligase.